A 106-amino-acid chain; its full sequence is Large ribosomal subunit protein uL24 (106 aa).

It belongs to the universal ribosomal protein uL24 family. In terms of assembly, part of the 50S ribosomal subunit.

Functionally, one of two assembly initiator proteins, it binds directly to the 5'-end of the 23S rRNA, where it nucleates assembly of the 50S subunit. In terms of biological role, one of the proteins that surrounds the polypeptide exit tunnel on the outside of the subunit. This Paracidovorax citrulli (strain AAC00-1) (Acidovorax citrulli) protein is Large ribosomal subunit protein uL24.